Consider the following 1001-residue polypeptide: Phosphatidylinositol 4,5-bisphosphate 5-phosphatase A (1001 aa).

Residues 1–12 (MEGQSRSGSAKS) are compositionally biased toward polar residues. Disordered regions lie at residues 1 to 130 (MEGQ…VASV) and 144 to 412 (SASA…QPTC). An RSXSXX motif 1 motif is present at residues 6 to 11 (RSGSAK). Positions 13-28 (GTRTGLGPLPGTHGAL) are enriched in low complexity. Residues 29–42 (QTGTPSKKVNSSFQ) show a composition bias toward polar residues. At Arg56 the chain carries Asymmetric dimethylarginine; alternate. Arg56 is modified (omega-N-methylarginine; alternate). Arg65 carries the omega-N-methylarginine modification. At Arg76 the chain carries Asymmetric dimethylarginine. Arg83 carries the asymmetric dimethylarginine; alternate modification. At Arg83 the chain carries Omega-N-methylarginine; alternate. A compositionally biased stretch (polar residues) spans 161–174 (SPTSRDQKQLSPTS). Ser171 is modified (phosphoserine). The span at 180 to 196 (ALATSGLSLALASQEQP) shows a compositional bias: low complexity. Pro residues predominate over residues 197 to 210 (PQSPSSPSPVPSPV). Positions 284 to 294 (ARPEAPRHSPE) are enriched in basic and acidic residues. Residues Ser292 and Ser325 each carry the phosphoserine modification. Pro residues predominate over residues 338 to 348 (VPPPLPKPPRS). The SH3-binding signature appears at 346 to 351 (PRSPSR). 2 stretches are compositionally biased toward low complexity: residues 349–361 (PSRSPSRSPNRSP) and 394–411 (SPVATATSPTSSWSAQPT). The short motif at 351 to 356 (RSPSRS) is the RSXSXX motif 2 element. Residues 420 to 723 (ITVVTWNVGT…SDHKPVAARF (304 aa)) are catalytic. The segment at 724 to 835 (LLQFAFRDDV…IGVTEPFQIS (112 aa)) is required for ruffle localization. A disordered region spans residues 837–1001 (PTSESASSST…LGLEDGGLGP (165 aa)). A compositionally biased stretch (low complexity) spans 838 to 853 (TSESASSSTDSSGTSS). 2 consecutive short sequence motifs (RSXSXX motif) follow at residues 869–874 (RSPSPG) and 880–885 (RSRSPG). At Ser898 the chain carries Phosphoserine. Low complexity-rich tracts occupy residues 905–917 (SRSPSPQSRQLPR) and 925–936 (SSGSRGSSEEGP). An RSXSXX motif 5 motif is present at residues 906 to 911 (RSPSPQ). The span at 937–949 (SGPPGPWAFPPAV) shows a compositional bias: pro residues. Ser985 carries the phosphoserine modification.

The protein belongs to the inositol 1,4,5-trisphosphate 5-phosphatase type II family. In terms of processing, phosphorylated on Ser/Thr residues. As to expression, expressed in heart, brain, kidney, stomach, small intestine and lung. Not expressed in spleen, thymus, skeletal muscle, testis and skin.

The protein localises to the cytoplasm. The catalysed reaction is 1D-myo-inositol 1,4,5-trisphosphate + H2O = 1D-myo-inositol 1,4-bisphosphate + phosphate. It catalyses the reaction 1D-myo-inositol 1,3,4,5-tetrakisphosphate + H2O = 1D-myo-inositol 1,3,4-trisphosphate + phosphate. It carries out the reaction a 1,2-diacyl-sn-glycero-3-phospho-(1D-myo-inositol-4,5-bisphosphate) + H2O = a 1,2-diacyl-sn-glycero-3-phospho-(1D-myo-inositol 4-phosphate) + phosphate. Functionally, inositol 5-phosphatase, which converts inositol 1,4,5-trisphosphate to inositol 1,4-bisphosphate. Also converts phosphatidylinositol 4,5-bisphosphate to phosphatidylinositol 4-phosphate and inositol 1,3,4,5-tetrakisphosphate to inositol 1,3,4-trisphosphate in vitro. May be involved in modulation of the function of inositol and phosphatidylinositol polyphosphate-binding proteins that are present at membranes ruffles. The chain is Phosphatidylinositol 4,5-bisphosphate 5-phosphatase A (Inpp5j) from Rattus norvegicus (Rat).